A 200-amino-acid chain; its full sequence is 3-isopropylmalate dehydratase small subunit (200 aa).

It belongs to the LeuD family. LeuD type 1 subfamily. Heterodimer of LeuC and LeuD.

The enzyme catalyses (2R,3S)-3-isopropylmalate = (2S)-2-isopropylmalate. Its pathway is amino-acid biosynthesis; L-leucine biosynthesis; L-leucine from 3-methyl-2-oxobutanoate: step 2/4. In terms of biological role, catalyzes the isomerization between 2-isopropylmalate and 3-isopropylmalate, via the formation of 2-isopropylmaleate. This chain is 3-isopropylmalate dehydratase small subunit, found in Pseudarthrobacter chlorophenolicus (strain ATCC 700700 / DSM 12829 / CIP 107037 / JCM 12360 / KCTC 9906 / NCIMB 13794 / A6) (Arthrobacter chlorophenolicus).